A 301-amino-acid chain; its full sequence is Probable alpha-L-glutamate ligase 2 (301 aa).

In terms of domain architecture, ATP-grasp spans 104–287 (MQLLSRKGIG…VASMIIEFIV (184 aa)). ATP contacts are provided by residues Lys-141, 178–179 (EY), Asp-187, and 211–213 (RSN). Residues Asp-248, Glu-260, and Asn-262 each contribute to the Mg(2+) site. The Mn(2+) site is built by Asp-248, Glu-260, and Asn-262.

It belongs to the RimK family. The cofactor is Mg(2+). It depends on Mn(2+) as a cofactor.

The sequence is that of Probable alpha-L-glutamate ligase 2 from Pseudoalteromonas atlantica (strain T6c / ATCC BAA-1087).